Consider the following 244-residue polypeptide: tRNA (guanine-N(7)-)-methyltransferase (244 aa).

Positions 42, 67, 94, and 116 each coordinate S-adenosyl-L-methionine. Residue aspartate 116 is part of the active site. Substrate is bound by residues lysine 120, aspartate 150, and 191–194; that span reads TYYE.

The protein belongs to the class I-like SAM-binding methyltransferase superfamily. TrmB family.

The catalysed reaction is guanosine(46) in tRNA + S-adenosyl-L-methionine = N(7)-methylguanosine(46) in tRNA + S-adenosyl-L-homocysteine. Its pathway is tRNA modification; N(7)-methylguanine-tRNA biosynthesis. In terms of biological role, catalyzes the formation of N(7)-methylguanine at position 46 (m7G46) in tRNA. The polypeptide is tRNA (guanine-N(7)-)-methyltransferase (Porphyromonas gingivalis (strain ATCC BAA-308 / W83)).